The following is a 141-amino-acid chain: Hemoglobin subunit alpha-1/2 (141 aa).

A Globin domain is found at 1–141 (VLSPADKTNV…VSTVLTSKYR (141 aa)). Ser-3 carries the post-translational modification Phosphoserine. Lys-7 is modified (N6-succinyllysine). Residue Thr-8 is modified to Phosphothreonine. Residue Lys-11 is modified to N6-succinyllysine. Lys-16 is subject to N6-acetyllysine; alternate. Lys-16 bears the N6-succinyllysine; alternate mark. At Tyr-24 the chain carries Phosphotyrosine. Ser-35 is subject to Phosphoserine. The residue at position 40 (Lys-40) is an N6-succinyllysine. Ser-49 is subject to Phosphoserine. Residue His-58 coordinates O2. His-87 provides a ligand contact to heme b. Ser-102 carries the post-translational modification Phosphoserine. Thr-108 is modified (phosphothreonine). A phosphoserine mark is found at Ser-124 and Ser-131. Thr-134 and Thr-137 each carry phosphothreonine. A Phosphoserine modification is found at Ser-138.

It belongs to the globin family. In terms of assembly, heterotetramer of two alpha chains and two beta chains. In terms of tissue distribution, red blood cells.

Involved in oxygen transport from the lung to the various peripheral tissues. This Macaca speciosa (Stump-tail macaque) protein is Hemoglobin subunit alpha-1/2.